The primary structure comprises 324 residues: Putative HTH-type transcriptional regulatory protein UNCMA_15260 (324 aa).

In terms of domain architecture, HTH cro/C1-type spans 132 to 189 (LRSLREAKNISLGELAMALGVSRRTISKYESGMNATIEAALKLEEILDAPIACPVNMI). A DNA-binding region (H-T-H motif) is located at residues 143–162 (LGELAMALGVSRRTISKYES).

This Methanocella arvoryzae (strain DSM 22066 / NBRC 105507 / MRE50) protein is Putative HTH-type transcriptional regulatory protein UNCMA_15260.